The following is a 234-amino-acid chain: LexA repressor (234 aa).

Residues 26 to 46 (FDEMKTALELTSKSGIHRLIT) constitute a DNA-binding region (H-T-H motif). Active-site for autocatalytic cleavage activity residues include S155 and K193.

It belongs to the peptidase S24 family. In terms of assembly, homodimer.

The enzyme catalyses Hydrolysis of Ala-|-Gly bond in repressor LexA.. Represses a number of genes involved in the response to DNA damage (SOS response), including recA and lexA. In the presence of single-stranded DNA, RecA interacts with LexA causing an autocatalytic cleavage which disrupts the DNA-binding part of LexA, leading to derepression of the SOS regulon and eventually DNA repair. The polypeptide is LexA repressor (Bartonella henselae (strain ATCC 49882 / DSM 28221 / CCUG 30454 / Houston 1) (Rochalimaea henselae)).